A 380-amino-acid chain; its full sequence is Carbamoyl phosphate synthase small chain (380 aa).

A CPSase region spans residues 1 to 187 (MTTSTRGAAK…VVPAIGAKRF (187 aa)). 3 residues coordinate L-glutamine: S55, G236, and G238. A Glutamine amidotransferase type-1 domain is found at 188–380 (TVAAVDLGIK…FVSLMEGQRA (193 aa)). Catalysis depends on C264, which acts as the Nucleophile. Positions 265, 268, 306, 308, and 309 each coordinate L-glutamine. Catalysis depends on residues H354 and E356.

It belongs to the CarA family. Composed of two chains; the small (or glutamine) chain promotes the hydrolysis of glutamine to ammonia, which is used by the large (or ammonia) chain to synthesize carbamoyl phosphate. Tetramer of heterodimers (alpha,beta)4.

It catalyses the reaction hydrogencarbonate + L-glutamine + 2 ATP + H2O = carbamoyl phosphate + L-glutamate + 2 ADP + phosphate + 2 H(+). The enzyme catalyses L-glutamine + H2O = L-glutamate + NH4(+). It participates in amino-acid biosynthesis; L-arginine biosynthesis; carbamoyl phosphate from bicarbonate: step 1/1. The protein operates within pyrimidine metabolism; UMP biosynthesis via de novo pathway; (S)-dihydroorotate from bicarbonate: step 1/3. Its function is as follows. Small subunit of the glutamine-dependent carbamoyl phosphate synthetase (CPSase). CPSase catalyzes the formation of carbamoyl phosphate from the ammonia moiety of glutamine, carbonate, and phosphate donated by ATP, constituting the first step of 2 biosynthetic pathways, one leading to arginine and/or urea and the other to pyrimidine nucleotides. The small subunit (glutamine amidotransferase) binds and cleaves glutamine to supply the large subunit with the substrate ammonia. This chain is Carbamoyl phosphate synthase small chain, found in Streptomyces avermitilis (strain ATCC 31267 / DSM 46492 / JCM 5070 / NBRC 14893 / NCIMB 12804 / NRRL 8165 / MA-4680).